The sequence spans 949 residues: Sensor histidine kinase RcsC (949 aa).

Residues 1–19 lie on the Cytoplasmic side of the membrane; the sequence is MKYLASFRTTLKASRYMFR. Residues 20–41 traverse the membrane as a helical segment; sequence ALALVLWLLIAFSSVFYIVNAL. The Periplasmic portion of the chain corresponds to 42–313; that stretch reads HQRESEIRQE…PVDKVLERIR (272 aa). A helical transmembrane segment spans residues 314-335; that stretch reads MVILNAILLNVLAGAALFTLAR. The Cytoplasmic portion of the chain corresponds to 336-949; sequence MYERRIFIPA…AERVRKSRES (614 aa). A PAS domain is found at 357 to 425; that stretch reads QFNRKIVASA…VLTSNNTNLQ (69 aa). A Histidine kinase domain is found at 476 to 692; that stretch reads TVSHELRTPL…QFTVRIPLYG (217 aa). A Phosphohistidine; by autocatalysis modification is found at His-479. In terms of domain architecture, ABL spans 705 to 805; sequence SGKRCWLAVR…ARIYLIEMES (101 aa). Residues 826–940 enclose the Response regulatory domain; that stretch reads MILVVDDHPI…VIKQTLTVYA (115 aa). Asp-875 is subject to 4-aspartylphosphate.

This sequence belongs to the RcsC family. Interacts with RcsD. In terms of processing, autophosphorylated. Activation probably requires a transfer of a phosphate group from a His in the transmitter domain to an Asp in the receiver domain.

It localises to the cell inner membrane. The catalysed reaction is ATP + protein L-histidine = ADP + protein N-phospho-L-histidine.. Functionally, component of the Rcs signaling system, which controls transcription of numerous genes. RcsC functions as a membrane-associated protein kinase that phosphorylates RcsD in response to environmental signals. The phosphoryl group is then transferred to the response regulator RcsB. Involved in regulation of K30 capsular polysaccharide synthesis. This Escherichia coli protein is Sensor histidine kinase RcsC.